The sequence spans 499 residues: Glutelin type-A 2 (499 aa).

A signal peptide spans 1 to 24 (MASINRPIVFFTVCLFLLCDGSLA). 2 disulfides stabilise this stretch: C46–C79 and C122–C313. Positions 51 to 248 (LQAFEPIRSV…AFGISNQVAR (198 aa)) constitute a Cupin type-1 1 domain. The interval 280 to 300 (EQGQMQSREHYQEGGYQQSQY) is disordered. A Cupin type-1 2 domain is found at 319–468 (QNIDNPNRAD…AYRISREEAQ (150 aa)).

Belongs to the 11S seed storage protein (globulins) family. As to quaternary structure, hexamer; each subunit is composed of an acidic and a basic chain derived from a single precursor and linked by a disulfide bond.

Its function is as follows. Seed storage protein. In Oryza sativa subsp. japonica (Rice), this protein is Glutelin type-A 2 (GLUA2).